The chain runs to 73 residues: Ferredoxin-thioredoxin reductase, variable chain (73 aa).

The tract at residues asparagine 43 to proline 46 is interaction with ferredoxin.

It belongs to the ferredoxin thioredoxin reductase alpha subunit family. As to quaternary structure, heterodimer of subunit A (variable subunit) and subunit B (catalytic subunit). Heterodimeric FTR forms a complex with ferredoxin and thioredoxin.

Functionally, variable subunit of the ferredoxin-thioredoxin reductase (FTR), which catalyzes the two-electron reduction of thioredoxins by the electrons provided by reduced ferredoxin. This is Ferredoxin-thioredoxin reductase, variable chain (ftrV) from Synechococcus sp. (strain ATCC 27144 / PCC 6301 / SAUG 1402/1) (Anacystis nidulans).